The chain runs to 184 residues: Peptidyl-tRNA hydrolase (184 aa).

Tyr-14 is a tRNA binding site. The Proton acceptor role is filled by His-19. 2 residues coordinate tRNA: Phe-60 and Asn-62.

It belongs to the PTH family. In terms of assembly, monomer.

The protein resides in the cytoplasm. The enzyme catalyses an N-acyl-L-alpha-aminoacyl-tRNA + H2O = an N-acyl-L-amino acid + a tRNA + H(+). Its function is as follows. Hydrolyzes ribosome-free peptidyl-tRNAs (with 1 or more amino acids incorporated), which drop off the ribosome during protein synthesis, or as a result of ribosome stalling. In terms of biological role, catalyzes the release of premature peptidyl moieties from peptidyl-tRNA molecules trapped in stalled 50S ribosomal subunits, and thus maintains levels of free tRNAs and 50S ribosomes. The protein is Peptidyl-tRNA hydrolase of Mesomycoplasma hyopneumoniae (strain 7448) (Mycoplasma hyopneumoniae).